Reading from the N-terminus, the 1060-residue chain is RNA-binding protein 27 (1060 aa).

Basic and acidic residues-rich tracts occupy residues 91 to 102 (LVQEKEEIKEEV) and 124 to 143 (TRSE…DGKW). 2 disordered regions span residues 91–143 (LVQE…DGKW) and 162–235 (WRRG…GAQS). A compositionally biased stretch (basic residues) spans 165–185 (GRSKSRSKSRGLSRSRSRSRG). Basic and acidic residues predominate over residues 186 to 211 (RSKDRDPNRNVEHRERSKFKSERNDL). Over residues 225-235 (SSEQYSSGAQS) the composition is skewed to polar residues. The C3H1-type zinc finger occupies 273–301 (LPPKRRCRDYDERGFCVLGDLCQFDHGND). Pro residues-rich tracts occupy residues 319–356 (PPPG…PGPG) and 371–384 (QPPP…PRPP). The tract at residues 319–412 (PPPGLPPPPP…PNLASVGTRL (94 aa)) is disordered. Residues 386 to 402 (TQSSLINSRDQPGTSAV) show a composition bias toward polar residues. Threonine 447 carries the phosphothreonine modification. An Omega-N-methylarginine modification is found at arginine 455. The segment at 565-592 (MSGLEGPLTKKPWLGKQGNNNQNKPGFL) is disordered. Positions 579 to 588 (GKQGNNNQNK) are enriched in low complexity. The RRM domain maps to 600–674 (TKLEVKKIPQ…RFIRVLWHRE (75 aa)). The stretch at 809–886 (VQEVLKKKQE…KDELKTSSAV (78 aa)) forms a coiled coil. Phosphoserine is present on serine 927. Disordered stretches follow at residues 940–968 (PVGR…SLNH) and 1006–1060 (DRRL…SWRR). A phosphoserine mark is found at serine 1012 and serine 1020. The segment covering 1024–1053 (ETEEEEVKEEETETSDLFLPDDDDEDEDEY) has biased composition (acidic residues).

The protein localises to the cytoplasm. Its subcellular location is the nucleus speckle. Functionally, may be involved in the turnover of nuclear polyadenylated (pA+) RNA. This is RNA-binding protein 27 from Homo sapiens (Human).